A 334-amino-acid polypeptide reads, in one-letter code: Adenosine deaminase (334 aa).

Histidine 12 and histidine 14 together coordinate Zn(2+). Substrate contacts are provided by histidine 14, aspartate 16, and glycine 170. Histidine 197 serves as a coordination point for Zn(2+). Glutamate 200 (proton donor) is an active-site residue. Aspartate 278 provides a ligand contact to Zn(2+). A substrate-binding site is contributed by aspartate 279.

This sequence belongs to the metallo-dependent hydrolases superfamily. Adenosine and AMP deaminases family. Adenosine deaminase subfamily. It depends on Zn(2+) as a cofactor.

It carries out the reaction adenosine + H2O + H(+) = inosine + NH4(+). The enzyme catalyses 2'-deoxyadenosine + H2O + H(+) = 2'-deoxyinosine + NH4(+). Catalyzes the hydrolytic deamination of adenosine and 2-deoxyadenosine. This Yersinia pseudotuberculosis serotype O:1b (strain IP 31758) protein is Adenosine deaminase.